Consider the following 313-residue polypeptide: Porphobilinogen deaminase (313 aa).

An S-(dipyrrolylmethanemethyl)cysteine modification is found at Cys-242.

The protein belongs to the HMBS family. In terms of assembly, monomer. It depends on dipyrromethane as a cofactor.

The catalysed reaction is 4 porphobilinogen + H2O = hydroxymethylbilane + 4 NH4(+). It participates in porphyrin-containing compound metabolism; protoporphyrin-IX biosynthesis; coproporphyrinogen-III from 5-aminolevulinate: step 2/4. In terms of biological role, tetrapolymerization of the monopyrrole PBG into the hydroxymethylbilane pre-uroporphyrinogen in several discrete steps. The protein is Porphobilinogen deaminase of Pseudomonas fluorescens (strain ATCC BAA-477 / NRRL B-23932 / Pf-5).